A 333-amino-acid chain; its full sequence is MATSMLGSVPGPRPFGLAGLFRRRPPRDPWERVRRLPRLSAVRRSVAAASGPGIPDSHLYCLELLRKRDYESYLCSLLFPAECQRSASALRAFNVELAQVKDSVSEKTIGLMRMQFWRKAVEDMFCDNPPHQPVAMELWKAVKRHNLTKRWLLRIIDEREKNLDDKAYRSIRELETYAENTQSSLLYLTLEVLGVKDVHADHAASHIGKAQGIVTCLRATPYHSSRRQVFLPMDVCVQHGVSQEDFLRRNQDKNVRDVVYDIASQAHLHLKHARSFHSRVPAEAFPAFLQTVSLEDYLKKIQRVDFDIFHPSLQQKNTLLPLSLYIQSWRKRY.

The N-terminal 44 residues, methionine 1 to arginine 44, are a transit peptide targeting the mitochondrion.

This sequence belongs to the NDUFAF6 family.

It localises to the mitochondrion inner membrane. Its function is as follows. Involved in the assembly of mitochondrial NADH:ubiquinone oxidoreductase complex (complex I) at early stages. May play a role in the biogenesis of complex I subunit MT-ND1. This is NADH dehydrogenase (ubiquinone) complex I, assembly factor 6 (Ndufaf6) from Rattus norvegicus (Rat).